Reading from the N-terminus, the 1740-residue chain is SH3 and multiple ankyrin repeat domains protein 3 (1740 aa).

The tract at residues 1 to 75 is intramolecular interaction with the ANK repeats; it reads MDGPGASAVV…KFLDEERLLQ (75 aa). The residue at position 122 (Tyr122) is a Phosphotyrosine. 6 ANK repeats span residues 148-181, 182-214, 215-245, 249-278, 282-311, and 315-345; these read SGEC…FRTR, DGLT…YKDS, RGLT…QLGT, NGWQ…NMGA, SGNT…NKDV, and NSQT…DVVP. The segment at 354–466 is disordered; that stretch reads KRRRLAGPSG…PPPRGPKRKL (113 aa). 4 positions are modified to phosphoserine: Ser373, Ser375, Ser387, and Ser394. Positions 404 to 415 are enriched in basic and acidic residues; that stretch reads LQEEKDRDRDGE. The segment covering 444-460 has biased composition (pro residues); the sequence is APGPGPASPAPPAPPPR. In terms of domain architecture, SH3 spans 470-529; it reads VPGRKFIAVKAHSPQGEGEIPLHRGEAVKVLSIGEGGFWEGTVKGRTGWFPADCVEEVQM. At Ser482 the chain carries Phosphoserine. Tyr555 bears the Phosphotyrosine mark. The region spanning 570–664 is the PDZ domain; sequence VAILQKRDHE…RLVMKVVSVT (95 aa). Residues 664–687 are disordered; the sequence is TRKPEEDSARRRAPPPPKRAPSTT. Positions 677 to 684 are required for interaction with ABI1; the sequence is PPPPKRAP. Residues Ser694, Ser781, Ser790, and Ser801 each carry the phosphoserine modification. Disordered regions lie at residues 759 to 855, 868 to 1053, 1115 to 1199, 1211 to 1463, and 1476 to 1518; these read RQGL…RSSF, AGLY…QPSR, AARE…MILS, LIVV…GPAR, and GDPV…EPVG. A compositionally biased stretch (pro residues) spans 812–845; the sequence is IPPPPQTAPPPPPAPYYFDSGPPPTFSPPPPPPG. Ser891 and Ser898 each carry phosphoserine. Phosphothreonine is present on Thr913. Position 931 is a phosphotyrosine (Tyr931). Residue Arg966 is modified to Asymmetric dimethylarginine. Residues 1017–1027 show a composition bias toward basic and acidic residues; the sequence is VKERRLEERRR. A compositionally biased stretch (polar residues) spans 1123-1132; sequence SQTPSRSPTP. Thr1131 is subject to Phosphothreonine. Residues Ser1135, Ser1160, Ser1164, and Ser1167 each carry the phosphoserine modification. The span at 1175–1195 shows a compositional bias: basic and acidic residues; the sequence is ARREAEKPTREERKSPEDKKS. Thr1235 is subject to Phosphothreonine. 2 stretches are compositionally biased toward pro residues: residues 1252-1262 and 1322-1334; these read MPSPRAQPPGS and TPPP…PTTV. Ser1254 carries the phosphoserine modification. The segment covering 1335–1344 has biased composition (low complexity); it reads PSPASGKPSS. The span at 1361-1371 shows a compositional bias: basic and acidic residues; the sequence is ADTRSSSDPHL. Residues 1372–1393 are compositionally biased toward low complexity; sequence ETTSTISTVSSMSTLSSESGEL. Residues 1411-1417 carry the SH3-binding motif; that stretch reads PPVPPKP. A Phosphoserine modification is found at Ser1421. Positions 1495–1515 form a coiled coil; that stretch reads ISELSSRLQQLNKDTRSLGEE. The span at 1496-1506 shows a compositional bias: polar residues; it reads SELSSRLQQLN. 4 positions are modified to phosphoserine: Ser1511, Ser1522, Ser1530, and Ser1549. Disordered regions lie at residues 1556 to 1594 and 1637 to 1673; these read ISAQ…PASL and VRSV…QQKP. Residues 1637 to 1647 are compositionally biased toward low complexity; that stretch reads VRSVSARSRSP. Phosphoserine is present on residues Ser1644, Ser1646, and Ser1648. Residues 1648–1658 are compositionally biased toward pro residues; the sequence is SPSPLPSPSPG. The span at 1659–1668 shows a compositional bias: low complexity; the sequence is SGPSAGPRRP. The SAM domain occupies 1677–1740; that stretch reads WSKFDVGDWL…ERALRQLDGS (64 aa).

The protein belongs to the SHANK family. As to quaternary structure, may homomultimerize via its SAM domain. Interacts with BAIAP2, DBNL and SLC17A7/VGLUT1. Interacts with DLGAP1/GKAP, GRM1/MGLUR1, GRM5/MGLUR5 and LZTS3 C-termini via its PDZ domain. Interacts with ABI1, HOMER1, HOMER2, HOMER3 and CTTN/cortactin SH3 domain. Is part of a complex with DLG4/PSD-95 and DLGAP1/GKAP. Interacts (via PDZ domain) with the GRIA1 subunit of the AMPA receptor (via PDZ-binding motif). Interacts with WASF1 and CYFIP2; the interactions mediate the association of SHANK3 with the WAVE1 complex. Interacts with ARPC2; the interaction probably mediates the association of SHANK3 with the Arp2/3 complex. Interacts (via ANK repeats) with SHARPIN and SPTAN1. Interacts (via PDZ domain) with ARHGAP44 (probably via PDZ-binding motif); the interaction takes place in dendritic spines and promotes GRIA1 exocytosis. Interacts with CAMK2A. Interacts with DIP2A. Interacts with ADGRL3. In terms of tissue distribution, widely expressed in brain (at protein level).

It localises to the cytoplasm. The protein localises to the postsynaptic density. It is found in the cell projection. The protein resides in the dendritic spine. Major scaffold postsynaptic density protein which interacts with multiple proteins and complexes to orchestrate the dendritic spine and synapse formation, maturation and maintenance. Interconnects receptors of the postsynaptic membrane including NMDA-type and metabotropic glutamate receptors via complexes with GKAP/PSD-95 and HOMER, respectively, and the actin-based cytoskeleton. Plays a role in the structural and functional organization of the dendritic spine and synaptic junction through the interaction with Arp2/3 and WAVE1 complex as well as the promotion of the F-actin clusters. By way of this control of actin dynamics, participates in the regulation of developing neurons growth cone motility and the NMDA receptor-signaling. Also modulates GRIA1 exocytosis and GRM5/MGLUR5 expression and signaling to control the AMPA and metabotropic glutamate receptor-mediated synaptic transmission and plasticity. May be required at an early stage of synapse formation and be inhibited by IGF1 to promote synapse maturation. In Rattus norvegicus (Rat), this protein is SH3 and multiple ankyrin repeat domains protein 3 (Shank3).